We begin with the raw amino-acid sequence, 429 residues long: MSLIVIGLNHKTAPVEIREKIAFNSKEAIKEALKELIQREGIGEVVIISTCNRVEIYVYTANVSDLKRENQVEETIKAFLSNFHNIEIGEFENYLYVYKDTEAVEHLFKVASSLDSMIVGEPQITGQVKESYEIALSERTTSLILNYLMNRALFTAKRVRNETRIGENPVSVSYAAVGLIKKVFDELSKKSILLVGAGEMAELALRHLIGSGIKNVYLTNRTFQRAEEIAKEFNGVAVPFGNLKEQLVKTDIVICSTGAPHYVITEQMLKEVMPLRKHKPIFFIDISVPRNVDPACNELDNVYLYNIDDLQDVVDSNILERKKEAEKALSIVQEETEKFFQWLNSLESVPVIVSIRNKAEQVRQEEIEKFKAKYKDLPPELINSIDYLTQSIINKIMHSPTVALKNNCENKEILIFSARRLFGLDSEEE.

Residues 50–53, S116, 121–123, and Q127 each bind substrate; these read TCNR and EPQ. C51 functions as the Nucleophile in the catalytic mechanism. An NADP(+)-binding site is contributed by 196–201; that stretch reads GAGEMA.

The protein belongs to the glutamyl-tRNA reductase family. Homodimer.

It carries out the reaction (S)-4-amino-5-oxopentanoate + tRNA(Glu) + NADP(+) = L-glutamyl-tRNA(Glu) + NADPH + H(+). It functions in the pathway porphyrin-containing compound metabolism; protoporphyrin-IX biosynthesis; 5-aminolevulinate from L-glutamyl-tRNA(Glu): step 1/2. Functionally, catalyzes the NADPH-dependent reduction of glutamyl-tRNA(Glu) to glutamate 1-semialdehyde (GSA). The chain is Glutamyl-tRNA reductase from Thermodesulfovibrio yellowstonii (strain ATCC 51303 / DSM 11347 / YP87).